Consider the following 558-residue polypeptide: SPATS2-like protein (558 aa).

Ala-2 is subject to N-acetylalanine. The span at 63–79 (GKKKNNKRKRSKSKQHQ) shows a compositional bias: basic residues. 2 disordered regions span residues 63 to 148 (GKKK…RGIT) and 161 to 202 (DGNP…SNAP). 2 stretches are compositionally biased toward basic and acidic residues: residues 80 to 92 (GNKD…ERPE) and 110 to 142 (GCEK…EPPR). Residue Ser-120 is modified to Phosphoserine. Residues 279–344 (KEEAMDILTA…ARFSCDIEQL (66 aa)) are a coiled coil. Residues 383–514 (KQGNFSRKSS…SEKARRRQHA (132 aa)) are disordered. A compositionally biased stretch (polar residues) spans 416 to 433 (DACQQTMPTNKQQNGPSN). The residue at position 455 (Ser-455) is a Phosphoserine. Residues 469–485 (HEHRRQPHNGFRPKNKG) are compositionally biased toward basic residues.

It belongs to the SPATS2 family.

The protein resides in the cytoplasm. It is found in the nucleus. It localises to the nucleolus. This chain is SPATS2-like protein (Spats2l), found in Rattus norvegicus (Rat).